A 244-amino-acid chain; its full sequence is Methylthioribulose-1-phosphate dehydratase (244 aa).

Residue Cys89 coordinates substrate. The Zn(2+) site is built by His107 and His109. Glu130 functions as the Proton donor/acceptor in the catalytic mechanism. A Zn(2+)-binding site is contributed by His192.

This sequence belongs to the aldolase class II family. MtnB subfamily. Requires Zn(2+) as cofactor.

It localises to the cytoplasm. The enzyme catalyses 5-(methylsulfanyl)-D-ribulose 1-phosphate = 5-methylsulfanyl-2,3-dioxopentyl phosphate + H2O. The protein operates within amino-acid biosynthesis; L-methionine biosynthesis via salvage pathway; L-methionine from S-methyl-5-thio-alpha-D-ribose 1-phosphate: step 2/6. Its function is as follows. Catalyzes the dehydration of methylthioribulose-1-phosphate (MTRu-1-P) into 2,3-diketo-5-methylthiopentyl-1-phosphate (DK-MTP-1-P). This Saccharomyces cerevisiae (strain YJM789) (Baker's yeast) protein is Methylthioribulose-1-phosphate dehydratase.